The chain runs to 586 residues: Ezrin (586 aa).

One can recognise an FERM domain in the interval 2–295; it reads PKPINVRVTT…GNHELYMRRR (294 aa). Residue Lys60 is modified to N6-acetyllysine. The [IL]-x-C-x-x-[DE] motif motif lies at 115–120; sequence IYCPPE. Position 146 is a phosphotyrosine; by PDGFR (Tyr146). Residues 244-586 form an interaction with SCYL3 region; sequence EIRNISFNDK…KQRIDEFEAM (343 aa). Residues 302–462 adopt a coiled-coil conformation; sequence VQQMKAQARE…QDDLVKTKEE (161 aa). The segment at 305–340 is disordered; that stretch reads MKAQAREEKHQKQLERQQLESEKKRREAVEQEKEQM. The span at 308 to 340 shows a compositional bias: basic and acidic residues; sequence QAREEKHQKQLERQQLESEKKRREAVEQEKEQM. Tyr354 carries the phosphotyrosine; by PDGFR modification. Position 366 is a phosphoserine (Ser366). A Phosphotyrosine modification is found at Tyr478. Ser535 is modified (phosphoserine). Thr567 carries the phosphothreonine; by ROCK2 and PKC/PRKCI modification.

Interacts with PALS1. Found in a complex with EZR, PODXL and NHERF2. Interacts with MCC, PLEKHG6, PODXL, SCYL3/PACE1, NHERF1, NHERF2 and TMEM8B. Interacts (when phosphorylated) with FES/FPS. Interacts with dimeric S100P, the interaction may be activating through unmasking of F-actin binding sites. Identified in complexes that contain VIM, EZR, AHNAK, BFSP1, BFSP2, ANK2, PLEC, PRX and spectrin. Detected in a complex composed of at least EZR, AHNAK, PPL and PRX. Interacts with PDPN (via cytoplasmic domain); activates RHOA and promotes epithelial-mesenchymal transition. Interacts with SPN/CD43 cytoplasmic tail, CD44 and ICAM2. Interacts with SLC9A3; interaction targets SLC9A3 to the apical membrane. Interacts with SLC9A1; regulates interactions of SLC9A1 with cytoskeletal and promotes stress fiber formation. Interacts with CLIC5; may work together in a complex which also includes RDX and MYO6 to stabilize linkages between the plasma membrane and subjacent actin cytoskeleton at the base of stereocilia. In terms of processing, phosphorylated by tyrosine-protein kinases. Phosphorylation by ROCK2 suppresses the head-to-tail association of the N-terminal and C-terminal halves resulting in an opened conformation which is capable of actin and membrane-binding. Post-translationally, S-nitrosylation is induced by interferon-gamma and oxidatively-modified low-densitity lipoprotein (LDL(ox)) possibly implicating the iNOS-S100A8/9 transnitrosylase complex.

The protein resides in the apical cell membrane. The protein localises to the cell projection. It is found in the microvillus membrane. It localises to the ruffle membrane. Its subcellular location is the cytoplasm. The protein resides in the cell cortex. The protein localises to the cytoskeleton. It is found in the microvillus. Its activity is regulated as follows. A head-to-tail association, of the N-terminal and C-terminal halves results in a closed conformation (inactive form) which is incapable of actin or membrane-binding. Its function is as follows. Probably involved in connections of major cytoskeletal structures to the plasma membrane. In epithelial cells, required for the formation of microvilli and membrane ruffles on the apical pole. Along with PLEKHG6, required for normal macropinocytosis. The sequence is that of Ezrin (EZR) from Oryctolagus cuniculus (Rabbit).